A 264-amino-acid chain; its full sequence is Glycosylphosphatidylinositol anchor biosynthesis protein 11 (264 aa).

The interval 1 to 45 (MPLVDPVTMSTPSTPAKAMGKSLPNTVKDPSPPPKAGSHTRSPVE) is disordered. The next 6 membrane-spanning stretches (helical) occupy residues 49-69 (NSYY…VLLW), 83-103 (LILP…LPVA), 132-152 (LLSL…MVLF), 160-180 (APHT…PLFY), 202-222 (SVGG…PIPL), and 233-253 (VTVL…GRTL).

It belongs to the PIGF family.

The protein localises to the endoplasmic reticulum membrane. It functions in the pathway glycolipid biosynthesis; glycosylphosphatidylinositol-anchor biosynthesis. Functionally, acts in the GPI biosynthetic pathway between GlcNAc-PI synthesis and GPI transfer to protein. The sequence is that of Glycosylphosphatidylinositol anchor biosynthesis protein 11 (GPI11) from Pyricularia oryzae (strain 70-15 / ATCC MYA-4617 / FGSC 8958) (Rice blast fungus).